The sequence spans 72 residues: MGNRPLDILNDALNTSVIVRLKGAREFRGVLQGYDVHMNLVLDEAEELKDGEIVRKIGGVVIRGDNVVYVSP.

Residues 4–72 enclose the Sm domain; sequence RPLDILNDAL…RGDNVVYVSP (69 aa).

It belongs to the snRNP Sm proteins family.

The chain is Putative snRNP Sm-like protein from Methanococcoides burtonii (strain DSM 6242 / NBRC 107633 / OCM 468 / ACE-M).